The primary structure comprises 478 residues: ATP-dependent RNA helicase DDX19A (478 aa).

Alanine 2 carries the post-translational modification N-acetylalanine. The N-terminal lobe stretch occupies residues 2-299 (ATDSWALAVD…DPNIIKLKRE (298 aa)). A Glycyl lysine isopeptide (Lys-Gly) (interchain with G-Cter in SUMO1); alternate cross-link involves residue lysine 26. Lysine 26 is covalently cross-linked (Glycyl lysine isopeptide (Lys-Gly) (interchain with G-Cter in SUMO2); alternate). Positions 31 to 55 (KPDTNGVIKTNATPEKTDEEEKEDR) are disordered. The tract at residues 54-67 (DRAAQSLLNKLIRS) is N-terminal helix. The Q motif signature appears at 91–119 (KSFEELRLKPQLLQGVYAMGFNRPSKIQE). ATP is bound by residues glutamine 118 and 137–144 (SQSGTGKT). Positions 124-294 (MMLAEPPQNL…QKVVPDPNII (171 aa)) constitute a Helicase ATP-binding domain. Residues 241–244 (DEAD) carry the DEAD box motif. Residues 300–478 (EETLDTIKQY…DLDEIEKIAN (179 aa)) form a C-terminal lobe region. One can recognise a Helicase C-terminal domain in the interval 305-473 (TIKQYYVLCN…RLDTDDLDEI (169 aa)). The ATP site is built by arginine 428 and arginine 431.

The protein belongs to the DEAD box helicase family. DDX19/DBP5 subfamily.

It is found in the cytoplasm. Its subcellular location is the nucleus. The protein resides in the nucleoplasm. The enzyme catalyses ATP + H2O = ADP + phosphate + H(+). Its function is as follows. ATP-dependent RNA helicase involved in mRNA export from the nucleus. Rather than unwinding RNA duplexes, DDX19 functions as a remodeler of ribonucleoprotein particles, whereby proteins bound to nuclear mRNA are dissociated and replaced by cytoplasmic mRNA binding proteins. In Bos taurus (Bovine), this protein is ATP-dependent RNA helicase DDX19A (DDX19A).